A 193-amino-acid polypeptide reads, in one-letter code: Molybdenum cofactor guanylyltransferase (193 aa).

GTP contacts are provided by residues 8–10 (LAG), lysine 21, aspartate 67, and aspartate 98. Residue aspartate 98 participates in Mg(2+) binding.

It belongs to the MobA family. Monomer. The cofactor is Mg(2+).

The protein resides in the cytoplasm. The enzyme catalyses Mo-molybdopterin + GTP + H(+) = Mo-molybdopterin guanine dinucleotide + diphosphate. Its function is as follows. Transfers a GMP moiety from GTP to Mo-molybdopterin (Mo-MPT) cofactor (Moco or molybdenum cofactor) to form Mo-molybdopterin guanine dinucleotide (Mo-MGD) cofactor. The chain is Molybdenum cofactor guanylyltransferase from Cereibacter sphaeroides (Rhodobacter sphaeroides).